The following is a 279-amino-acid chain: Vomeronasal type-1 receptor A8 (279 aa).

The Extracellular segment spans residues 1 to 19 (MNKDHTLYCSVYIRNAFFS). A helical membrane pass occupies residues 20 to 40 (EIGIGISANSCLLLFHTFMFI). Residues 41–49 (RGHRPRLTD) are Cytoplasmic-facing. The helical transmembrane segment at 50–70 (LPIGFVALIHLVMLLLAAYIT) threads the bilayer. The Extracellular portion of the chain corresponds to 71–93 (EDFFMSSGGWDDITCKLVIFLHR). A disulfide bridge connects residues Cys85 and Cys172. A helical membrane pass occupies residues 94–114 (FFRSLSVCATCLLSVFQAIIL). Topologically, residues 115 to 134 (CPQSSHLAKLKQNSPHQLSY) are cytoplasmic. The chain crosses the membrane as a helical span at residues 135 to 155 (FFIFLSIFYTSISSQILIAAI). The Extracellular segment spans residues 156-159 (PTQN). Asn159 is a glycosylation site (N-linked (GlcNAc...) asparagine). The helical transmembrane segment at 160–180 (ITFVNLIYITNSCSFLPLSSS) threads the bilayer. The Cytoplasmic portion of the chain corresponds to 181-187 (MQHTFST). The chain crosses the membrane as a helical span at residues 188–208 (LLTFRNVFVIGLMGLSTCYMA). At 209-238 (TLLCRHKTRSQRLQNSKLSPKATPEQRALR) the chain is on the extracellular side. Residues 239–259 (TILMLMSFFLLMSTFDSIISY) traverse the membrane as a helical segment. The Cytoplasmic segment spans residues 260-279 (SRTIITGKSTALLCPDSCRS).

This sequence belongs to the G-protein coupled receptor 1 family. As to expression, expressed in a subset of sensory neurons located in the apical layer of the vomeronasal organ.

Its subcellular location is the cell membrane. Functionally, putative pheromone receptor implicated in the regulation of social and reproductive behavior. This Mus musculus (Mouse) protein is Vomeronasal type-1 receptor A8.